Here is a 154-residue protein sequence, read N- to C-terminus: 3-hydroxyacyl-[acyl-carrier-protein] dehydratase FabZ (154 aa).

The active site involves His-60.

It belongs to the thioester dehydratase family. FabZ subfamily.

The protein localises to the cytoplasm. It catalyses the reaction a (3R)-hydroxyacyl-[ACP] = a (2E)-enoyl-[ACP] + H2O. Involved in unsaturated fatty acids biosynthesis. Catalyzes the dehydration of short chain beta-hydroxyacyl-ACPs and long chain saturated and unsaturated beta-hydroxyacyl-ACPs. In Synechococcus sp. (strain CC9311), this protein is 3-hydroxyacyl-[acyl-carrier-protein] dehydratase FabZ.